Consider the following 329-residue polypeptide: MSKILFFSPCSLFSHTMNKNSRLHTNSNIGNTFFSEIGIGITGNSFLLLYHILKFIRGHRPRLTDLPIGLLSLIHLLMLLVAAFIATDIFISRRGWDDIICKFLVYLYRVLRGLSLCTTSMLSVLQAIILSPRSSCLSKFKHISLHHILCAILFLSVLYMLISSQLLVSIIATPNLTTNDLTYVTQSCSILPLSYLVESINSTLLAIREYFLISLMFLSTWYIVALLCMHRKQTQHLQETRLSLKKSPEQSATQTILMLMTFFVLMTIYDNIVSCLRTMLLNDPTSYSIELFMIHIYATVSPFVFMSNEKHIVNFLRSMGKRMINLNLH.

At Met-1 to Thr-32 the chain is on the extracellular side. Residues Phe-33–Leu-53 form a helical membrane-spanning segment. Residues Lys-54–Asp-65 lie on the Cytoplasmic side of the membrane. A helical membrane pass occupies residues Leu-66 to Ala-86. Residues Thr-87–Arg-109 are Extracellular-facing. The cysteines at positions 101 and 188 are disulfide-linked. Residues Val-110–Leu-130 traverse the membrane as a helical segment. Topologically, residues Ser-131–His-147 are cytoplasmic. The chain crosses the membrane as a helical span at residues Ile-148–Val-168. The Extracellular portion of the chain corresponds to Ser-169–Glu-209. Asn-175 and Asn-201 each carry an N-linked (GlcNAc...) asparagine glycan. The helical transmembrane segment at Tyr-210–His-230 threads the bilayer. The Cytoplasmic segment spans residues Arg-231–Thr-255. The chain crosses the membrane as a helical span at residues Ile-256–Leu-276. Residues Arg-277–Thr-285 lie on the Extracellular side of the membrane. The chain crosses the membrane as a helical span at residues Ser-286–Met-306. Residues Ser-307 to His-329 are Cytoplasmic-facing.

Belongs to the G-protein coupled receptor 1 family.

The protein resides in the cell membrane. In terms of biological role, putative pheromone receptor implicated in the regulation of social and reproductive behavior. The sequence is that of Vomeronasal type-1 receptor 43 (Vmn1r43) from Mus musculus (Mouse).